A 199-amino-acid chain; its full sequence is Recombination protein RecR (199 aa).

A C4-type zinc finger spans residues 57 to 72 (CEICGNMDTENICRIC). The region spanning 80–175 (SVIAIVETVA…KISRLASGIP (96 aa)) is the Toprim domain.

It belongs to the RecR family.

Its function is as follows. May play a role in DNA repair. It seems to be involved in an RecBC-independent recombinational process of DNA repair. It may act with RecF and RecO. This chain is Recombination protein RecR, found in Rickettsia canadensis (strain McKiel).